The following is a 784-amino-acid chain: Rabenosyn-5 (784 aa).

At alanine 2 the chain carries N-acetylalanine. Serine 3 carries the phosphoserine modification. The C2H2-type zinc-finger motif lies at 14-37 (FLCPLCLKDLQSFYQLHSHYEEEH). Residues 100 to 263 (RSHLSDFKKH…HCKDTLLKRE (164 aa)) are necessary for the correct targeting to endosomes. An FYVE-type zinc finger spans residues 157–260 (DQDVPFCPDC…CCTHCKDTLL (104 aa)). Zn(2+) contacts are provided by cysteine 163, cysteine 166, cysteine 179, cysteine 182, cysteine 187, and cysteine 190. The span at 207–224 (KESLSTHTSPSQSPNSVH) shows a compositional bias: polar residues. Residues 207–241 (KESLSTHTSPSQSPNSVHGSRRGSISSMSSVSSVL) are disordered. Phosphoserine occurs at positions 215, 219, 226, and 230. Over residues 228 to 240 (RGSISSMSSVSSV) the composition is skewed to low complexity. Residues cysteine 252 and cysteine 255 each contribute to the Zn(2+) site. The segment at 264 to 500 (QQIDEKEHTP…QLQDEYDQQQ (237 aa)) is necessary for interaction with RAB4A. The interval 264 to 784 (QQIDEKEHTP…TLAKQKGGTD (521 aa)) is necessary for interaction with EHD1. 2 coiled-coil regions span residues 378–414 (TKEQ…LEER) and 472–531 (QAKA…RELE). Residues 390–400 (KEEMERKRAVE) show a composition bias toward basic and acidic residues. A disordered region spans residues 390–429 (KEEMERKRAVERQAALESQRRLEERQSGLASRAANGEVAS). The 20-residue stretch at 496-515 (YDQQQTEKAIELSRRQAEEE) folds into the UIM domain. The segment at 574–732 (DLGSSPVPSS…DSDSGPEAEE (159 aa)) is disordered. Polar residues predominate over residues 579 to 598 (PVPSSTAPKTPSLSSTQPTR). Residues 627 to 784 (PFDEEDLSSP…TLAKQKGGTD (158 aa)) form a necessary for interaction with RAB5A region. Positions 663-673 (PFEEEDEEEEA) are enriched in acidic residues. At serine 684 the chain carries Phosphoserine. Positions 722–732 (MDSDSGPEAEE) are enriched in acidic residues.

Interacts with EHD1, RAB4A, RAB5A, RAB14, RAB22A, RAB24 and VPS45. Binds simultaneously to RAB4A and RAB5A in vitro. Interacts with RAB4A and RAB5A that has been activated by GTP binding.

The protein localises to the cell membrane. Its subcellular location is the early endosome membrane. Rab4/Rab5 effector protein acting in early endocytic membrane fusion and membrane trafficking of recycling endosomes. Required for endosome fusion either homotypically or with clathrin coated vesicles. Plays a role in the lysosomal trafficking of CTSD/cathepsin D from the Golgi to lysosomes. Also promotes the recycling of transferrin directly from early endosomes to the plasma membrane. Binds phospholipid vesicles containing phosphatidylinositol 3-phosphate (PtdInsP3). Plays a role in the recycling of transferrin receptor to the plasma membrane. The chain is Rabenosyn-5 from Homo sapiens (Human).